A 119-amino-acid chain; its full sequence is Ribosome-binding factor A (119 aa).

It belongs to the RbfA family. In terms of assembly, monomer. Binds 30S ribosomal subunits, but not 50S ribosomal subunits or 70S ribosomes.

Its subcellular location is the cytoplasm. One of several proteins that assist in the late maturation steps of the functional core of the 30S ribosomal subunit. Associates with free 30S ribosomal subunits (but not with 30S subunits that are part of 70S ribosomes or polysomes). Required for efficient processing of 16S rRNA. May interact with the 5'-terminal helix region of 16S rRNA. The chain is Ribosome-binding factor A from Coxiella burnetii (strain CbuK_Q154) (Coxiella burnetii (strain Q154)).